The primary structure comprises 397 residues: Anhydro-N-acetylmuramic acid kinase (397 aa).

Residue 21–28 coordinates ATP; it reads GTSLDGVD. A compositionally biased stretch (polar residues) spans 373–384; that stretch reads TPTNLPSVTGAS. Residues 373–397 are disordered; it reads TPTNLPSVTGASARTPLGSLSVPGP.

The protein belongs to the anhydro-N-acetylmuramic acid kinase family.

It carries out the reaction 1,6-anhydro-N-acetyl-beta-muramate + ATP + H2O = N-acetyl-D-muramate 6-phosphate + ADP + H(+). It functions in the pathway amino-sugar metabolism; 1,6-anhydro-N-acetylmuramate degradation. It participates in cell wall biogenesis; peptidoglycan recycling. In terms of biological role, catalyzes the specific phosphorylation of 1,6-anhydro-N-acetylmuramic acid (anhMurNAc) with the simultaneous cleavage of the 1,6-anhydro ring, generating MurNAc-6-P. Is required for the utilization of anhMurNAc either imported from the medium or derived from its own cell wall murein, and thus plays a role in cell wall recycling. The sequence is that of Anhydro-N-acetylmuramic acid kinase from Salinibacter ruber (strain DSM 13855 / M31).